A 302-amino-acid polypeptide reads, in one-letter code: Ubiquinone biosynthesis protein COQ4, mitochondrial (302 aa).

The N-terminal 19 residues, 1–19 (MNSSPARAVRALVQSQSRQ), are a transit peptide targeting the mitochondrion. Residues His176, Asp177, His180, and Glu192 each coordinate Zn(2+). Basic and acidic residues predominate over residues 268–282 (PPPDMRDARKRERDA). The interval 268-302 (PPPDMRDARKRERDARRRRKQLETEAQQGLDAASL) is disordered.

This sequence belongs to the COQ4 family. As to quaternary structure, component of a multi-subunit COQ enzyme complex, composed of at least COQ3, COQ4, COQ5, COQ6, COQ7 and COQ9. It depends on Zn(2+) as a cofactor.

The protein resides in the mitochondrion inner membrane. The enzyme catalyses a 4-hydroxy-3-methoxy-5-(all-trans-polyprenyl)benzoate + H(+) = a 2-methoxy-6-(all-trans-polyprenyl)phenol + CO2. The protein operates within cofactor biosynthesis; ubiquinone biosynthesis. Functionally, lyase that catalyzes the C1-decarboxylation of 4-hydroxy-3-methoxy-5-(all-trans-polyprenyl)benzoic acid into 2-methoxy-6-(all-trans-polyprenyl)phenol during ubiquinone biosynthesis. The protein is Ubiquinone biosynthesis protein COQ4, mitochondrial of Pyricularia oryzae (strain 70-15 / ATCC MYA-4617 / FGSC 8958) (Rice blast fungus).